The chain runs to 491 residues: Protein nucleotidyltransferase YdiU (491 aa).

Residues glycine 92, glycine 94, arginine 95, lysine 115, aspartate 127, glycine 128, arginine 178, and arginine 185 each contribute to the ATP site. Aspartate 254 acts as the Proton acceptor in catalysis. The Mg(2+) site is built by asparagine 255 and aspartate 264. Aspartate 264 is a binding site for ATP.

This sequence belongs to the SELO family. It depends on Mg(2+) as a cofactor. Mn(2+) is required as a cofactor.

It carries out the reaction L-seryl-[protein] + ATP = 3-O-(5'-adenylyl)-L-seryl-[protein] + diphosphate. The enzyme catalyses L-threonyl-[protein] + ATP = 3-O-(5'-adenylyl)-L-threonyl-[protein] + diphosphate. The catalysed reaction is L-tyrosyl-[protein] + ATP = O-(5'-adenylyl)-L-tyrosyl-[protein] + diphosphate. It catalyses the reaction L-histidyl-[protein] + UTP = N(tele)-(5'-uridylyl)-L-histidyl-[protein] + diphosphate. It carries out the reaction L-seryl-[protein] + UTP = O-(5'-uridylyl)-L-seryl-[protein] + diphosphate. The enzyme catalyses L-tyrosyl-[protein] + UTP = O-(5'-uridylyl)-L-tyrosyl-[protein] + diphosphate. Functionally, nucleotidyltransferase involved in the post-translational modification of proteins. It can catalyze the addition of adenosine monophosphate (AMP) or uridine monophosphate (UMP) to a protein, resulting in modifications known as AMPylation and UMPylation. The polypeptide is Protein nucleotidyltransferase YdiU (Mycolicibacterium paratuberculosis (strain ATCC BAA-968 / K-10) (Mycobacterium paratuberculosis)).